The primary structure comprises 325 residues: Probable ABC transporter permease YtrD (325 aa).

The next 8 helical transmembrane spans lie at 16 to 36 (VALVITILVFILGNPLSILNM), 63 to 83 (SSFISLFWIWGVVLAVSQLGI), 113 to 133 (MVIVVPQLIGYVLSVLLIMLL), 146 to 166 (LGMIIVSMLAYSLVMAGGALT), 179 to 199 (VAISPFLLISLPVINLEILFG), 233 to 253 (YLVIPAIMTIIFYIIGYISFV), 272 to 292 (PVQIIVIIIGIMGFGYFGFTA), and 298 to 318 (GYLIGMGTGAVIGFLISYFAI).

It belongs to the ABC-5 integral membrane protein family. The complex is composed of 2 ATP-binding proteins (YtrB and YtrE), 2 transmembrane proteins (YtrC and YtrD) and a solute-binding protein (YtrF).

It is found in the cell membrane. In terms of biological role, part of the ABC transporter complex YtrBCDEF that plays a role in acetoin utilization during stationary phase and sporulation. The polypeptide is Probable ABC transporter permease YtrD (ytrD) (Bacillus subtilis (strain 168)).